Reading from the N-terminus, the 79-residue chain is Cell division protein ZapB (79 aa).

A coiled-coil region spans residues 3-79; that stretch reads LEVFEKLEAK…QALLGRMEEV (77 aa). Over residues 36–45 the composition is skewed to polar residues; that stretch reads SLTQEVQSAQ. Residues 36–63 are disordered; it reads SLTQEVQSAQHQREELERENNSLKEQQS. Residues 46–57 show a composition bias toward basic and acidic residues; the sequence is HQREELERENNS.

The protein belongs to the ZapB family. Homodimer. The ends of the coiled-coil dimer bind to each other, forming polymers. Interacts with FtsZ.

Its subcellular location is the cytoplasm. In terms of biological role, non-essential, abundant cell division factor that is required for proper Z-ring formation. It is recruited early to the divisome by direct interaction with FtsZ, stimulating Z-ring assembly and thereby promoting cell division earlier in the cell cycle. Its recruitment to the Z-ring requires functional FtsA or ZipA. The sequence is that of Cell division protein ZapB from Salmonella agona (strain SL483).